A 77-amino-acid chain; its full sequence is Putative defensin-like protein 160 (77 aa).

A signal peptide spans 1–24 (MAKLSCSYFFILMLVFSALLMVEC). Cystine bridges form between C30–C77, C40–C59, C45–C71, and C49–C73.

This sequence belongs to the DEFL family.

It is found in the secreted. The sequence is that of Putative defensin-like protein 160 (LCR26) from Arabidopsis thaliana (Mouse-ear cress).